Here is a 400-residue protein sequence, read N- to C-terminus: ELAV-like protein 4 (400 aa).

The tract at residues 12–48 is disordered; it reads TMEPQVSNGPTSNTSNGPSSNSRNCPSPMQTGAATDD. Over residues 18 to 33 the composition is skewed to low complexity; sequence SNGPTSNTSNGPSSNS. Residues 34 to 44 show a composition bias toward polar residues; the sequence is RNCPSPMQTGA. RRM domains are found at residues 51 to 158, 166 to 246, and 317 to 395; these read TNLI…YARP, ANLY…FANN, and WCIF…FKTN.

This sequence belongs to the RRM elav family.

It is found in the cytoplasm. The protein resides in the perikaryon. Its subcellular location is the cell projection. The protein localises to the axon. It localises to the dendrite. It is found in the growth cone. Its function is as follows. RNA-binding protein that is involved in the post-transcriptional regulation of mRNAs. Plays a role in the regulation of mRNA stability, alternative splicing and translation. Binds to AU-rich element (ARE) sequences in the 3' untranslated region (3'UTR) of target mRNAs. Mainly plays a role in neuron-specific RNA processing. In Xenopus tropicalis (Western clawed frog), this protein is ELAV-like protein 4 (elavl4).